The sequence spans 257 residues: uncharacterized protein (257 aa).

N-linked (GlcNAc...) asparagine; by host glycosylation is found at N61, N95, N102, N111, N139, N148, and N152. A helical membrane pass occupies residues 233-253 (WYIIGGIFWVIVLIILVIFII).

It localises to the host membrane. The protein localises to the virion. This is an uncharacterized protein from Acanthamoeba polyphaga (Amoeba).